Reading from the N-terminus, the 99-residue chain is UPF0235 protein Sbal223_1335 (99 aa).

The protein belongs to the UPF0235 family.

The polypeptide is UPF0235 protein Sbal223_1335 (Shewanella baltica (strain OS223)).